The chain runs to 252 residues: Endonuclease NucS (252 aa).

This sequence belongs to the NucS endonuclease family.

The protein localises to the cytoplasm. Its function is as follows. Cleaves both 3' and 5' ssDNA extremities of branched DNA structures. This is Endonuclease NucS from Sulfurisphaera tokodaii (strain DSM 16993 / JCM 10545 / NBRC 100140 / 7) (Sulfolobus tokodaii).